Consider the following 141-residue polypeptide: Transcription antitermination protein NusB (141 aa).

This sequence belongs to the NusB family.

Involved in transcription antitermination. Required for transcription of ribosomal RNA (rRNA) genes. Binds specifically to the boxA antiterminator sequence of the ribosomal RNA (rrn) operons. This Treponema pallidum (strain Nichols) protein is Transcription antitermination protein NusB.